A 337-amino-acid chain; its full sequence is Autophagy-related protein 14 (337 aa).

Positions C5–C20 are cysteine repeats. The stretch at K87–L153 forms a coiled coil.

Belongs to the ATG14 family.

Its subcellular location is the preautophagosomal structure membrane. It localises to the vacuole membrane. In terms of biological role, required for cytoplasm to vacuole transport (Cvt) and autophagy as a part of the autophagy-specific VPS34 PI3-kinase complex I. This complex is essential to recruit the ATG8-phosphatidylinositol conjugate and the ATG12-ATG5 conjugate to the pre-autophagosomal structure. ATG14 mediates the specific binding of the VPS34 PI3-kinase complex I to the preautophagosomal structure (PAS). The protein is Autophagy-related protein 14 (ATG14) of Vanderwaltozyma polyspora (strain ATCC 22028 / DSM 70294 / BCRC 21397 / CBS 2163 / NBRC 10782 / NRRL Y-8283 / UCD 57-17) (Kluyveromyces polysporus).